Reading from the N-terminus, the 128-residue chain is Cytochrome c-type biogenesis protein CcmE (128 aa).

Residues 1–8 (MQKRVRNR) lie on the Cytoplasmic side of the membrane. A helical; Signal-anchor for type II membrane protein transmembrane segment spans residues 9 to 29 (LITIIICFCSACLGISIILYN). The Periplasmic portion of the chain corresponds to 30–128 (LEKNIVFFLP…KHDENYRPPQ (99 aa)). Positions 120 and 124 each coordinate heme.

This sequence belongs to the CcmE/CycJ family.

The protein resides in the cell inner membrane. Its function is as follows. Heme chaperone required for the biogenesis of c-type cytochromes. Transiently binds heme delivered by CcmC and transfers the heme to apo-cytochromes in a process facilitated by CcmF and CcmH. The sequence is that of Cytochrome c-type biogenesis protein CcmE from Rickettsia peacockii (strain Rustic).